The primary structure comprises 323 residues: Beta-ketoacyl-[acyl-carrier-protein] synthase III (323 aa).

Catalysis depends on residues cysteine 114 and histidine 250. Residues 251–255 (QANLR) are ACP-binding. The active site involves asparagine 280.

It belongs to the thiolase-like superfamily. FabH family. In terms of assembly, homodimer.

Its subcellular location is the cytoplasm. It carries out the reaction malonyl-[ACP] + acetyl-CoA + H(+) = 3-oxobutanoyl-[ACP] + CO2 + CoA. It participates in lipid metabolism; fatty acid biosynthesis. Catalyzes the condensation reaction of fatty acid synthesis by the addition to an acyl acceptor of two carbons from malonyl-ACP. Catalyzes the first condensation reaction which initiates fatty acid synthesis and may therefore play a role in governing the total rate of fatty acid production. Possesses both acetoacetyl-ACP synthase and acetyl transacylase activities. Its substrate specificity determines the biosynthesis of branched-chain and/or straight-chain of fatty acids. In Cereibacter sphaeroides (strain ATCC 17025 / ATH 2.4.3) (Rhodobacter sphaeroides), this protein is Beta-ketoacyl-[acyl-carrier-protein] synthase III.